The primary structure comprises 219 residues: 23.6 kDa heat shock protein, mitochondrial (219 aa).

The N-terminal 29 residues, 1 to 29, are a transit peptide targeting the mitochondrion; that stretch reads MALARQCLSKRLAAGCALARPLHAASPVA. The region spanning 104–219 is the sHSP domain; that stretch reads QVAETLTRPL…KRSVTEVKVR (116 aa).

This sequence belongs to the small heat shock protein (HSP20) family. As to quaternary structure, may form oligomeric structures.

The protein localises to the mitochondrion. The sequence is that of 23.6 kDa heat shock protein, mitochondrial (HSP23.6) from Oryza sativa subsp. japonica (Rice).